Reading from the N-terminus, the 386-residue chain is Mannitol-1-phosphate 5-dehydrogenase (386 aa).

6–17 (AIHFGGGNIGRG) provides a ligand contact to NAD(+). Residue lysine 214 is part of the active site.

Belongs to the mannitol dehydrogenase family. As to quaternary structure, monomer.

The catalysed reaction is D-mannitol 1-phosphate + NAD(+) = beta-D-fructose 6-phosphate + NADH + H(+). Its function is as follows. Catalyzes the NAD(H)-dependent interconversion of D-fructose 6-phosphate and D-mannitol 1-phosphate in the mannitol metabolic pathway. Plays a key role in liamocins biosynthesis by providing the mannitol moity that is linked to 3,5-dihydroxydecanoic acid (provided by the HR-PKS PKS1) via ester bond formation catalyzed by the esterase EST1. The polypeptide is Mannitol-1-phosphate 5-dehydrogenase (Aureobasidium melanogenum (Aureobasidium pullulans var. melanogenum)).